Consider the following 216-residue polypeptide: UPF0502 protein Spea_2482 (216 aa).

This sequence belongs to the UPF0502 family.

The chain is UPF0502 protein Spea_2482 from Shewanella pealeana (strain ATCC 700345 / ANG-SQ1).